The following is a 342-amino-acid chain: tRNA N6-adenosine threonylcarbamoyltransferase (342 aa).

Residues His-120 and His-124 each coordinate Fe cation. Substrate-binding positions include 142 to 146, Asp-175, Gly-188, Asp-192, and Asn-281; that span reads VVSGG. Asp-310 contacts Fe cation.

Belongs to the KAE1 / TsaD family. Requires Fe(2+) as cofactor.

The protein resides in the cytoplasm. The catalysed reaction is L-threonylcarbamoyladenylate + adenosine(37) in tRNA = N(6)-L-threonylcarbamoyladenosine(37) in tRNA + AMP + H(+). In terms of biological role, required for the formation of a threonylcarbamoyl group on adenosine at position 37 (t(6)A37) in tRNAs that read codons beginning with adenine. Is involved in the transfer of the threonylcarbamoyl moiety of threonylcarbamoyl-AMP (TC-AMP) to the N6 group of A37, together with TsaE and TsaB. TsaD likely plays a direct catalytic role in this reaction. This chain is tRNA N6-adenosine threonylcarbamoyltransferase, found in Geobacillus thermodenitrificans (strain NG80-2).